Here is a 388-residue protein sequence, read N- to C-terminus: Pepsin A-4 (388 aa).

Positions 1–15 (MKWLLLLGLVALSEC) are cleaved as a signal peptide. A propeptide spans 16–62 (IMYKVPLIRKKSLRRTLSERGLLKDFLKKHNLNPARKYFPQWEAPTL) (activation peptide). The region spanning 76-385 (YFGTIGIGTP…DRANNQVGLA (310 aa)) is the Peptidase A1 domain. Residue Asp-94 is part of the active site. A disulfide bond links Cys-107 and Cys-112. Ser-130 carries the phosphoserine modification. The cysteines at positions 268 and 272 are disulfide-linked. Asp-277 is an active-site residue. The cysteines at positions 311 and 344 are disulfide-linked.

It belongs to the peptidase A1 family.

It is found in the secreted. The enzyme catalyses Preferential cleavage: hydrophobic, preferably aromatic, residues in P1 and P1' positions. Cleaves 1-Phe-|-Val-2, 4-Gln-|-His-5, 13-Glu-|-Ala-14, 14-Ala-|-Leu-15, 15-Leu-|-Tyr-16, 16-Tyr-|-Leu-17, 23-Gly-|-Phe-24, 24-Phe-|-Phe-25 and 25-Phe-|-Tyr-26 bonds in the B chain of insulin.. Functionally, shows particularly broad specificity; although bonds involving phenylalanine and leucine are preferred, many others are also cleaved to some extent. The chain is Pepsin A-4 (PGA4) from Homo sapiens (Human).